Here is a 301-residue protein sequence, read N- to C-terminus: Glycine--tRNA ligase alpha subunit (301 aa).

The protein belongs to the class-II aminoacyl-tRNA synthetase family. As to quaternary structure, tetramer of two alpha and two beta subunits.

The protein resides in the cytoplasm. It catalyses the reaction tRNA(Gly) + glycine + ATP = glycyl-tRNA(Gly) + AMP + diphosphate. The polypeptide is Glycine--tRNA ligase alpha subunit (Shewanella frigidimarina (strain NCIMB 400)).